The chain runs to 212 residues: Mediator of RNA polymerase II transcription subunit 20 (212 aa).

This sequence belongs to the Mediator complex subunit 20 family. As to quaternary structure, component of the Mediator complex, which is composed of MED1, MED4, MED6, MED7, MED8, MED9, MED10, MED11, MED12, MED13, MED13L, MED14, MED15, MED16, MED17, MED18, MED19, MED20, MED21, MED22, MED23, MED24, MED25, MED26, MED27, MED29, MED30, MED31, CCNC, CDK8 and CDC2L6/CDK11. The MED12, MED13, CCNC and CDK8 subunits form a distinct module termed the CDK8 module. Mediator containing the CDK8 module is less active than Mediator lacking this module in supporting transcriptional activation. Individual preparations of the Mediator complex lacking one or more distinct subunits have been variously termed ARC, CRSP, DRIP, PC2, SMCC and TRAP. Interacts with PPARG.

The protein resides in the nucleus. Component of the Mediator complex, a coactivator involved in the regulated transcription of nearly all RNA polymerase II-dependent genes. Mediator functions as a bridge to convey information from gene-specific regulatory proteins to the basal RNA polymerase II transcription machinery. Mediator is recruited to promoters by direct interactions with regulatory proteins and serves as a scaffold for the assembly of a functional preinitiation complex with RNA polymerase II and the general transcription factors. This chain is Mediator of RNA polymerase II transcription subunit 20 (MED20), found in Macaca fascicularis (Crab-eating macaque).